We begin with the raw amino-acid sequence, 2178 residues long: Streptococcal hemagglutinin (2178 aa).

Positions 1–90 (MFFKRQKGQY…AVVTSSSVYA (90 aa)) are cleaved as a signal peptide. The tract at residues 91–137 (EEEQALEKVIDTRDVLATRGEAVLSEEAATTLSSEGANPVESLSDTL) is non-repeat region 1 (NR1). Residues 138–219 (SASESASANS…SLISSDSSNS (82 aa)) form a ser-rich region 1 (SR1) region. Low complexity predominate over residues 192 to 244 (TSQSFSSTTSSTQSSNNESLISSDSSNSLNTNQSVSARNQNARVRTRRAVAAN). Disordered stretches follow at residues 192-246 (TSQS…ANDT), 495-557 (VSAS…SVSA), 584-653 (SAST…SVSA), 836-857 (SASTSASVSASESASTSASVSA), 884-917 (SASTSASVSASESASTSASVSASESASTSASVSA), 944-993 (SAST…SESA), 1020-1289 (SASV…SVSA), 1341-1390 (ASTS…ESAS), 1488-1685 (SASV…SVSA), 1725-1901 (ASTS…SAST), and 2119-2151 (LSQSLSDSQSTSATQSMHDRISKGQLPRTGESE). A non-repeat region 2 (NR2) region spans residues 220–449 (LNTNQSVSAR…ANRVVKDLQI (230 aa)). Residues 450 to 2143 (SKSNSASQSS…SMHDRISKGQ (1694 aa)) form a ser-rich region 2 (SR2) region. Positions 2119–2130 (LSQSLSDSQSTS) are enriched in low complexity. The LPXTG sorting signal motif lies at 2144–2148 (LPRTG). A Pentaglycyl murein peptidoglycan amidated threonine modification is found at threonine 2147. A propeptide spans 2148–2178 (GESESKASILALGIGALGLAFKKRKKNESED) (removed by sortase).

This sequence belongs to the serine-rich repeat protein (SRRP) family. The protein is glycosylated in vivo; constructs without SR1 and SR2 are not glycosylated.

It localises to the secreted. The protein localises to the cell wall. In terms of biological role, a cell wall protein involved with PadA in host cell interactions required for colonization and pathogensis. Mediates hemagglutination and adherence to ghst glycoproteins. Recognizes fetuin-A (AHSG), a highly glycosylated human plasma protein, also involved in recognition of human platelets, probably via platelet glycoprotein Ib alpha (GP1BA). Acts in concert with PadA to promote binding to glycosylated human fibronectin (FN1) and vitronectin (VTN), and biofilm formation. Plays a major role in fibronectin and vitronectin binding; binding is mediated by glycosylated regions. Probably mediates interaction of PadA with resting platelets. This Streptococcus gordonii (strain Challis / ATCC 35105 / BCRC 15272 / CH1 / DL1 / V288) protein is Streptococcal hemagglutinin.